We begin with the raw amino-acid sequence, 374 residues long: 3-isopropylmalate dehydrogenase (374 aa).

Residue 83–96 (GPKWDNLPPEIRPE) coordinates NAD(+). R104, R114, R142, and D231 together coordinate substrate. The Mg(2+) site is built by D231, D255, and D259. NAD(+) is bound at residue 288–300 (GSAPDIAGQNKAN).

It belongs to the isocitrate and isopropylmalate dehydrogenases family. LeuB type 1 subfamily. In terms of assembly, homodimer. It depends on Mg(2+) as a cofactor. The cofactor is Mn(2+).

It is found in the cytoplasm. The enzyme catalyses (2R,3S)-3-isopropylmalate + NAD(+) = 4-methyl-2-oxopentanoate + CO2 + NADH. Its pathway is amino-acid biosynthesis; L-leucine biosynthesis; L-leucine from 3-methyl-2-oxobutanoate: step 3/4. Its function is as follows. Catalyzes the oxidation of 3-carboxy-2-hydroxy-4-methylpentanoate (3-isopropylmalate) to 3-carboxy-4-methyl-2-oxopentanoate. The product decarboxylates to 4-methyl-2 oxopentanoate. This is 3-isopropylmalate dehydrogenase from Carboxydothermus hydrogenoformans (strain ATCC BAA-161 / DSM 6008 / Z-2901).